The following is a 376-amino-acid chain: Drebrin-like protein B (376 aa).

Positions 2-133 constitute an ADF-H domain; that stretch reads SVNLSKNGAA…EPESIMEKVA (132 aa). Residues 175-231 are a coiled coil; the sequence is KENFWAKAEKDEEERRIEEHRRANVEKDRLERERKEREQREAEERERRFRERSKEID. The segment covering 202 to 242 has biased composition (basic and acidic residues); it reads DRLERERKEREQREAEERERRFRERSKEIDGHRKQQEEVEK. A disordered region spans residues 202-288; it reads DRLERERKER…FTASQQEEEN (87 aa). Residues 268 to 283 show a composition bias toward polar residues; sequence ESGSVSAQPEQFTASQ. The 60-residue stretch at 317-376 folds into the SH3 domain; that stretch reads DSGMCARALYDYQAADDTEISFDPDDVIIQIEMIDDGWWRGVAPSGHFGMFPANYVELLE.

Belongs to the ABP1 family.

The protein resides in the cytoplasm. Its subcellular location is the cytoskeleton. It localises to the cell projection. The protein localises to the lamellipodium. It is found in the ruffle. The protein resides in the cell cortex. Its subcellular location is the cytosol. It localises to the synapse. The protein localises to the perikaryon. It is found in the neuron projection. The protein resides in the cell membrane. Its subcellular location is the cytoplasmic vesicle. It localises to the clathrin-coated vesicle membrane. The protein localises to the golgi apparatus membrane. It is found in the podosome. The protein resides in the early endosome. Its subcellular location is the dendrite. It localises to the postsynaptic density. Its function is as follows. Adapter protein that binds F-actin and dynamin, and thereby plays a role in receptor-mediated endocytosis. Plays a role in the reorganization of the actin cytoskeleton, formation of cell projections, such as neurites, in neuron morphogenesis and synapse formation. Does not bind G-actin and promote actin polymerization by itself, but excerts its functions by interaction with other proteins. Required for the formation of organized podosome rosettes. In Xenopus laevis (African clawed frog), this protein is Drebrin-like protein B (dbnl-b).